A 95-amino-acid polypeptide reads, in one-letter code: Ribonuclease kappa (95 aa).

2 helical membrane-spanning segments follow: residues 12-32 and 68-88; these read GLII…FFYI and CWIA…QFYM.

This sequence belongs to the RNase K family.

The protein localises to the membrane. Endoribonuclease. Functionally, (Microbial infection) Required for the initial stages of clathrin-mediated endocytic uptake of a diverse set of flaviviruses, including dengue and West Nile. Not required for clathrin-mediated endocytosis and macropinocytosis. The sequence is that of Ribonuclease kappa from Drosophila melanogaster (Fruit fly).